A 684-amino-acid chain; its full sequence is Threonine--tRNA ligase (684 aa).

A TGS domain is found at 1-66 (MTAVASSAPA…DTDVEVTPVA (66 aa)). Positions 261 to 567 (DHRKLGVELD…LTEHYAGAFP (307 aa)) are catalytic. Cysteine 366, histidine 417, and histidine 544 together coordinate Zn(2+).

The protein belongs to the class-II aminoacyl-tRNA synthetase family. Homodimer. The cofactor is Zn(2+).

The protein localises to the cytoplasm. The enzyme catalyses tRNA(Thr) + L-threonine + ATP = L-threonyl-tRNA(Thr) + AMP + diphosphate + H(+). In terms of biological role, catalyzes the attachment of threonine to tRNA(Thr) in a two-step reaction: L-threonine is first activated by ATP to form Thr-AMP and then transferred to the acceptor end of tRNA(Thr). Also edits incorrectly charged L-seryl-tRNA(Thr). In Mycolicibacterium smegmatis (strain ATCC 700084 / mc(2)155) (Mycobacterium smegmatis), this protein is Threonine--tRNA ligase.